The primary structure comprises 533 residues: Lymphocyte cytosolic protein 2 (533 aa).

Residues 15-81 (WDPDSLADYF…INKNEERRSI (67 aa)) enclose the SAM domain. The residue at position 23 (Y23) is a Phosphotyrosine. Residues 78–417 (RRSIFTRKPQ…PPSPAEEENS (340 aa)) form a disordered region. The span at 108 to 155 (FEEDDYESPNDDQDGEDDGDYESPNEEEEAPVEDDADYEPPPSNDEEA) shows a compositional bias: acidic residues. The span at 184–213 (QQPPVPPQRPMAALPPPPAGRNHSPLPPPQ) shows a compositional bias: pro residues. Phosphoserine is present on S207. Composition is skewed to polar residues over residues 337 to 350 (MSSNTFPSRSTKPS) and 365 to 376 (SESNSSFPQSAS). 2 positions are modified to phosphoserine: S376 and S410. A compositionally biased stretch (pro residues) spans 400 to 411 (LPLPNKPRPPSP). The 109-residue stretch at 422 to 530 (WYVSYITRPE…RYQCTLTHAA (109 aa)) folds into the SH2 domain.

As to quaternary structure, interacts with SLA. Interacts with CBLB. Interacts with GRB2. Interacts with SHB. Interacts with PRAM1. Interacts (via SH2 domain) with CD6 (via tyrosine phosphorylated C-terminus). Interacts with FYB1 and the phosphorylated form of FYB2. Interacts with 14-3-3 adapter/YWHAZ; this phosphorylation leads to YWHAZ proteolytic degradation. Interacts with VAV1; this interaction plays a role in TCR-mediated cytokine production. Interacts with AGER; this interaction plays an important role in AGER-mediated pro-inflammatory responses and cytokine release. Phosphorylated after T-cell receptor activation by ZAP70, ITK and TXK, which leads to the up-regulation of Th1 preferred cytokine IL-2. SYK-dependent phosphorylation is required for recruitment of PI3K signaling components. As to expression, highly expressed in spleen, thymus and peripheral blood leukocytes. Highly expressed also in T-cell and monocytic cell lines, expressed at lower level in B-cell lines. Not detected in fibroblast or neuroblastoma cell lines.

Its subcellular location is the cytoplasm. In terms of biological role, adapter protein primarily involved in signaling pathways within T-cells, as well as other immune cells such as platelets, mast cells, and natural killer (NK) cells. Plays a crucial role for transducing signal from the T-cell receptor (TCR) after antigen recognition leading to T-cell activation. Mechanistically, once phosphorylated by the kinase ZAP70, mediates interactions with the guanine-nucleotide exchange factor VAV1, the adapter protein NCK and the kinase ITK. In turn, stimulates the activation of PKC-theta/PRKCQ and NF-kappa-B transcriptional activity in response to CD3 and CD28 costimulation. Also plays an essential role in AGER-induced signaling pathways including p38 MAPK and ERK1/2 activation leading to cytokine release and pro-inflammatory responses. The sequence is that of Lymphocyte cytosolic protein 2 (LCP2) from Homo sapiens (Human).